Here is an 80-residue protein sequence, read N- to C-terminus: Caltrin (80 aa).

The N-terminal stretch at 1 to 32 (MMAGRRSWPAMATVLLALLVCLGELVDSKPQP) is a signal peptide.

Its function is as follows. Inhibits calcium transport into spermatozoa; it does not bind directly to calcium. Binds to calmodulin. Inhibits the growth of microorganisms. Seem to act as an antibiotic by permeabilizing the bacterial membrane. The polypeptide is Caltrin (PYY2) (Bos taurus (Bovine)).